The chain runs to 1000 residues: DENN domain-containing protein 2A (1000 aa).

4 disordered regions span residues 1-155 (MLEA…LRFQ), 174-328 (DGSA…RKSY), 427-464 (KLLD…LGDL), and 491-525 (KRVK…LKAH). The span at 34 to 43 (QLNSVPNSGP) shows a compositional bias: polar residues. 4 stretches are compositionally biased toward basic and acidic residues: residues 56–70 (IKDK…KEPP), 79–117 (DGQE…DSRA), 140–155 (SQHR…LRFQ), and 221–237 (HLEV…DWKG). 2 stretches are compositionally biased toward pro residues: residues 249–258 (PPKPFINPVP) and 288–307 (PPLP…PPPT). Over residues 427–436 (KLLDTRKLSR) the composition is skewed to basic and acidic residues. Polar residues predominate over residues 496 to 506 (LSQSTESNSGK). Residue serine 544 is modified to Phosphoserine. The uDENN domain maps to 559-708 (EYFVVVSLHK…PFPALGKTII (150 aa)). A cDENN domain is found at 730–863 (RLEHVDFESL…LQVALEHILE (134 aa)). Positions 865-960 (RNDLACDQDG…QERELRRQDA (96 aa)) constitute a dDENN domain.

The protein localises to the cytoplasm. It localises to the cytoskeleton. In terms of biological role, guanine nucleotide exchange factor (GEF) which may activate RAB9A and RAB9B. Promotes the exchange of GDP to GTP, converting inactive GDP-bound Rab proteins into their active GTP-bound form. May play a role in late endosomes back to trans-Golgi network/TGN transport. This is DENN domain-containing protein 2A (Dennd2a) from Mus musculus (Mouse).